We begin with the raw amino-acid sequence, 401 residues long: tRNA N6-adenosine threonylcarbamoyltransferase (401 aa).

Fe cation is bound by residues His111 and His115. Residues 191–195 (LASGG), Asp223, Gly236, and Asn336 contribute to the substrate site. Residue Asp364 coordinates Fe cation.

This sequence belongs to the KAE1 / TsaD family. The cofactor is Fe(2+).

The protein resides in the cytoplasm. The enzyme catalyses L-threonylcarbamoyladenylate + adenosine(37) in tRNA = N(6)-L-threonylcarbamoyladenosine(37) in tRNA + AMP + H(+). Functionally, required for the formation of a threonylcarbamoyl group on adenosine at position 37 (t(6)A37) in tRNAs that read codons beginning with adenine. Is involved in the transfer of the threonylcarbamoyl moiety of threonylcarbamoyl-AMP (TC-AMP) to the N6 group of A37, together with TsaE and TsaB. TsaD likely plays a direct catalytic role in this reaction. The protein is tRNA N6-adenosine threonylcarbamoyltransferase of Tropheryma whipplei (strain TW08/27) (Whipple's bacillus).